Here is an 81-residue protein sequence, read N- to C-terminus: Cytotoxin I-like P-15 (81 aa).

A signal peptide spans 1-21; the sequence is MKTLLLTLAAATIVCLDLGYT. Disulfide bonds link Cys24-Cys42, Cys35-Cys59, Cys63-Cys74, and Cys75-Cys80.

The protein belongs to the three-finger toxin family. Short-chain subfamily. Type IA cytotoxin sub-subfamily. Monomer in solution; Homodimer and oligomer in the presence of negatively charged lipids forming a pore with a size ranging between 20 and 30 Angstroms. Expressed by the venom gland.

The protein resides in the secreted. Its subcellular location is the target cell membrane. In terms of biological role, shows cytolytic activity on many different cells by forming pore in lipid membranes. In vivo, increases heart rate or kills the animal by cardiac arrest. In addition, it binds to heparin with high affinity, interacts with Kv channel-interacting protein 1 (KCNIP1) in a calcium-independent manner, and binds to integrin alpha-V/beta-3 (ITGAV/ITGB3) with moderate affinity. This is Cytotoxin I-like P-15 from Naja atra (Chinese cobra).